A 544-amino-acid polypeptide reads, in one-letter code: Chaperonin GroEL 3 (544 aa).

ATP contacts are provided by residues 30 to 33 (TLGP), lysine 51, 87 to 91 (DGTTT), glycine 415, and aspartate 495.

It belongs to the chaperonin (HSP60) family. Forms a cylinder of 14 subunits composed of two heptameric rings stacked back-to-back. Interacts with the co-chaperonin GroES.

The protein localises to the cytoplasm. It catalyses the reaction ATP + H2O + a folded polypeptide = ADP + phosphate + an unfolded polypeptide.. In terms of biological role, together with its co-chaperonin GroES, plays an essential role in assisting protein folding. The GroEL-GroES system forms a nano-cage that allows encapsulation of the non-native substrate proteins and provides a physical environment optimized to promote and accelerate protein folding. The chain is Chaperonin GroEL 3 from Psychromonas ingrahamii (strain DSM 17664 / CCUG 51855 / 37).